The following is a 330-amino-acid chain: NADH-quinone oxidoreductase subunit H (330 aa).

8 helical membrane-spanning segments follow: residues 3 to 23 (AAFV…FSAL), 76 to 96 (PVFM…MAAI), 118 to 138 (VGLL…LLAG), 161 to 181 (EVVT…ISLV), 188 to 208 (AGGM…LFLI), 244 to 264 (FFIG…LIFL), 272 to 292 (FIPG…LFLW), and 307 to 327 (WLCW…TGIV).

The protein belongs to the complex I subunit 1 family. NDH-1 is composed of 14 different subunits. Subunits NuoA, H, J, K, L, M, N constitute the membrane sector of the complex.

It is found in the cell inner membrane. The catalysed reaction is a quinone + NADH + 5 H(+)(in) = a quinol + NAD(+) + 4 H(+)(out). Its function is as follows. NDH-1 shuttles electrons from NADH, via FMN and iron-sulfur (Fe-S) centers, to quinones in the respiratory chain. The immediate electron acceptor for the enzyme in this species is believed to be ubiquinone. Couples the redox reaction to proton translocation (for every two electrons transferred, four hydrogen ions are translocated across the cytoplasmic membrane), and thus conserves the redox energy in a proton gradient. This subunit may bind ubiquinone. This is NADH-quinone oxidoreductase subunit H from Nitratiruptor sp. (strain SB155-2).